The sequence spans 278 residues: Beta-lactamase-like protein str5 (278 aa).

Residues 20 to 37 (VFVLAALLSATFAFFTHT) form a helical membrane-spanning segment. N-linked (GlcNAc...) asparagine glycosylation is present at N112.

It belongs to the beta-lactamase family.

It localises to the membrane. It functions in the pathway mycotoxin biosynthesis. In terms of biological role, beta-lactamase-like protein; part of the gene cluster that mediates the biosynthesis of strobilurin A, an antifungal polyketide that contains a key beta-methoxyacrylate toxophore that targets the complex III of the mitochondrial electron transport chain. Strobilurin biosynthesis begins with construction of benzoyl CoA by step-wise elimination of ammonia from phenylalanine by the phenylalanine ammonia-lyase str11, oxygenation by str8 and retro-Claisen reaction to form benzoic acid, which is activated to its CoA thiolester benzoyl CoA by the dedicated CoA ligase str10. Benzoyl CoA forms the starter unit for the highly reducing polyketide synthase stpks1 that produces the polyketide prestrobilutin A. The FAD-dependent oxygenase str9 then catalyzes the key oxidative rearrangement responsible for the creation of the beta-methoxyacrylate toxophore. Str9 performs epoxidation of the 2,3 olefin of prestrobilutin A, followed by Meinwald rearrangement to furnish the aldehyde intermediate. Rapid enolization of the aldehyde intermediate would give the beta-methoxyacrylate skeleton and methylations catalyzed by str2 and str3 complete the synthesis and lead to the production of strobilurin A. The short-chain dehydrogenase stl2 and the dehydrogenase str4 play a role in the shunt pathway leading to the production of bolineol. The cluster encodes no obvious halogenase gene that could be involved in production of strobilurin B, nor any obvious dimethylallyl-transferase that could be involved in the production of strobilurin G. It is possible that unknown proteins encoded in, or near, the cluster (such as str1 or stl1) may form new classes of halogenases or dimethylally-transferases, or that the responsible genes are located elsewhere on the genome. Similarly, proteins encoded by str5/str6 hydrolases appear to have no chemical role in the biosynthesis of strobilurin A. Finally, no obvious self-resistance gene is found within the cluster. The sequence is that of Beta-lactamase-like protein str5 from Strobilurus tenacellus.